The sequence spans 155 residues: 6,7-dimethyl-8-ribityllumazine synthase (155 aa).

Residues Trp-24, Ala-58–Glu-60, and Ala-82–Ile-84 contribute to the 5-amino-6-(D-ribitylamino)uracil site. Gly-87–Thr-88 contributes to the (2S)-2-hydroxy-3-oxobutyl phosphate binding site. The active-site Proton donor is His-90. Phe-115 is a 5-amino-6-(D-ribitylamino)uracil binding site. Residue Arg-129 coordinates (2S)-2-hydroxy-3-oxobutyl phosphate.

This sequence belongs to the DMRL synthase family. In terms of assembly, forms an icosahedral capsid composed of 60 subunits, arranged as a dodecamer of pentamers.

It carries out the reaction (2S)-2-hydroxy-3-oxobutyl phosphate + 5-amino-6-(D-ribitylamino)uracil = 6,7-dimethyl-8-(1-D-ribityl)lumazine + phosphate + 2 H2O + H(+). It participates in cofactor biosynthesis; riboflavin biosynthesis; riboflavin from 2-hydroxy-3-oxobutyl phosphate and 5-amino-6-(D-ribitylamino)uracil: step 1/2. Its function is as follows. Catalyzes the formation of 6,7-dimethyl-8-ribityllumazine by condensation of 5-amino-6-(D-ribitylamino)uracil with 3,4-dihydroxy-2-butanone 4-phosphate. This is the penultimate step in the biosynthesis of riboflavin. The chain is 6,7-dimethyl-8-ribityllumazine synthase from Saccharophagus degradans (strain 2-40 / ATCC 43961 / DSM 17024).